We begin with the raw amino-acid sequence, 270 residues long: Putative phosphoenolpyruvate synthase regulatory protein (270 aa).

150–157 (GVSRCGKT) serves as a coordination point for ADP.

The protein belongs to the pyruvate, phosphate/water dikinase regulatory protein family. PSRP subfamily.

The catalysed reaction is [pyruvate, water dikinase] + ADP = [pyruvate, water dikinase]-phosphate + AMP + H(+). It carries out the reaction [pyruvate, water dikinase]-phosphate + phosphate + H(+) = [pyruvate, water dikinase] + diphosphate. Bifunctional serine/threonine kinase and phosphorylase involved in the regulation of the phosphoenolpyruvate synthase (PEPS) by catalyzing its phosphorylation/dephosphorylation. In Shewanella piezotolerans (strain WP3 / JCM 13877), this protein is Putative phosphoenolpyruvate synthase regulatory protein.